We begin with the raw amino-acid sequence, 448 residues long: Senescence/dehydration-associated protein At4g35985, chloroplastic (448 aa).

Residues 1–36 (MECSATPPKLYPTVDTSTTVAPLPKSSSSSSSTNNN) are disordered. A chloroplast-targeting transit peptide spans 1–56 (MECSATPPKLYPTVDTSTTVAPLPKSSSSSSSTNNNNLYPSINVNDLVNNIFPDPT). Residues 26 to 36 (SSSSSSSTNNN) are compositionally biased toward low complexity. A Senescence domain is found at 248-416 (IAAGSGQLIK…AWTVFKIRQA (169 aa)). The interval 422–448 (AMKPSSLAKTVVKTAAKERKKGKKSSK) is disordered. Residues 439-448 (ERKKGKKSSK) are compositionally biased toward basic residues.

As to expression, expressed in leaves (especially in midribs and trichomes), apical meristemic regions, stems, roots and flowers.

The protein resides in the plastid. Its subcellular location is the chloroplast. The sequence is that of Senescence/dehydration-associated protein At4g35985, chloroplastic from Arabidopsis thaliana (Mouse-ear cress).